We begin with the raw amino-acid sequence, 476 residues long: Bifunctional protein GlmU (476 aa).

The tract at residues 1-232 is pyrophosphorylase; it reads MDNLAAIILA…PVEVMGINDR (232 aa). Residues 9 to 12, Lys23, Gln75, and 80 to 81 each bind UDP-N-acetyl-alpha-D-glucosamine; these read LAAG and GT. Position 105 (Asp105) interacts with Mg(2+). Gly142, Glu157, Asn172, and Asn230 together coordinate UDP-N-acetyl-alpha-D-glucosamine. Residue Asn230 coordinates Mg(2+). Residues 233–253 are linker; it reads VQLAEAARHARRRIAEEHMLN. Positions 254 to 476 are N-acetyltransferase; it reads GVTLVDPAAT…EGWKLRKRDQ (223 aa). The UDP-N-acetyl-alpha-D-glucosamine site is built by Arg353 and Lys371. Residue His383 is the Proton acceptor of the active site. UDP-N-acetyl-alpha-D-glucosamine-binding residues include Tyr386 and Asn397. Acetyl-CoA-binding positions include 406-407, Ser425, Ala443, and Arg460; that span reads NY.

This sequence in the N-terminal section; belongs to the N-acetylglucosamine-1-phosphate uridyltransferase family. In the C-terminal section; belongs to the transferase hexapeptide repeat family. In terms of assembly, homotrimer. It depends on Mg(2+) as a cofactor.

The protein localises to the cytoplasm. The catalysed reaction is alpha-D-glucosamine 1-phosphate + acetyl-CoA = N-acetyl-alpha-D-glucosamine 1-phosphate + CoA + H(+). The enzyme catalyses N-acetyl-alpha-D-glucosamine 1-phosphate + UTP + H(+) = UDP-N-acetyl-alpha-D-glucosamine + diphosphate. Its pathway is nucleotide-sugar biosynthesis; UDP-N-acetyl-alpha-D-glucosamine biosynthesis; N-acetyl-alpha-D-glucosamine 1-phosphate from alpha-D-glucosamine 6-phosphate (route II): step 2/2. It functions in the pathway nucleotide-sugar biosynthesis; UDP-N-acetyl-alpha-D-glucosamine biosynthesis; UDP-N-acetyl-alpha-D-glucosamine from N-acetyl-alpha-D-glucosamine 1-phosphate: step 1/1. It participates in bacterial outer membrane biogenesis; LPS lipid A biosynthesis. Functionally, catalyzes the last two sequential reactions in the de novo biosynthetic pathway for UDP-N-acetylglucosamine (UDP-GlcNAc). The C-terminal domain catalyzes the transfer of acetyl group from acetyl coenzyme A to glucosamine-1-phosphate (GlcN-1-P) to produce N-acetylglucosamine-1-phosphate (GlcNAc-1-P), which is converted into UDP-GlcNAc by the transfer of uridine 5-monophosphate (from uridine 5-triphosphate), a reaction catalyzed by the N-terminal domain. This chain is Bifunctional protein GlmU, found in Geobacter sulfurreducens (strain ATCC 51573 / DSM 12127 / PCA).